A 339-amino-acid polypeptide reads, in one-letter code: Ketol-acid reductoisomerase (NADP(+)) (339 aa).

One can recognise a KARI N-terminal Rossmann domain in the interval 1-182; sequence MRVYYDRDAD…GGGRAGIIET (182 aa). NADP(+) is bound by residues 24 to 27, Arg48, Ser51, Ser53, and 83 to 86; these read YGSQ and DELQ. His108 is an active-site residue. Gly134 lines the NADP(+) pocket. The KARI C-terminal knotted domain maps to 183–328; that stretch reads TFKEECETDL…EKLREMMPWI (146 aa). Mg(2+) contacts are provided by Asp191, Glu195, Glu227, and Glu231. Ser252 lines the substrate pocket.

It belongs to the ketol-acid reductoisomerase family. Mg(2+) is required as a cofactor.

The catalysed reaction is (2R)-2,3-dihydroxy-3-methylbutanoate + NADP(+) = (2S)-2-acetolactate + NADPH + H(+). The enzyme catalyses (2R,3R)-2,3-dihydroxy-3-methylpentanoate + NADP(+) = (S)-2-ethyl-2-hydroxy-3-oxobutanoate + NADPH + H(+). It participates in amino-acid biosynthesis; L-isoleucine biosynthesis; L-isoleucine from 2-oxobutanoate: step 2/4. It functions in the pathway amino-acid biosynthesis; L-valine biosynthesis; L-valine from pyruvate: step 2/4. Its function is as follows. Involved in the biosynthesis of branched-chain amino acids (BCAA). Catalyzes an alkyl-migration followed by a ketol-acid reduction of (S)-2-acetolactate (S2AL) to yield (R)-2,3-dihydroxy-isovalerate. In the isomerase reaction, S2AL is rearranged via a Mg-dependent methyl migration to produce 3-hydroxy-3-methyl-2-ketobutyrate (HMKB). In the reductase reaction, this 2-ketoacid undergoes a metal-dependent reduction by NADPH to yield (R)-2,3-dihydroxy-isovalerate. The protein is Ketol-acid reductoisomerase (NADP(+)) of Azorhizobium caulinodans (strain ATCC 43989 / DSM 5975 / JCM 20966 / LMG 6465 / NBRC 14845 / NCIMB 13405 / ORS 571).